Here is a 395-residue protein sequence, read N- to C-terminus: Major outer membrane porin, serovar F (395 aa).

The first 22 residues, 1–22 (MKKLLKSVLVFAALSSASSLQA), serve as a signal peptide directing secretion.

The protein belongs to the chlamydial porin (CP) (TC 1.B.2) family. As to quaternary structure, part of a disulfide cross-linked outer membrane complex (COMC) composed of the major outer membrane porin (MOMP), the small cysteine-rich protein (OmcA) and the large cysteine-rich periplasmic protein (OmcB).

Its subcellular location is the cell outer membrane. Its function is as follows. In elementary bodies (EBs, the infectious stage, which is able to survive outside the host cell) provides the structural integrity of the outer envelope through disulfide cross-links with the small cysteine-rich protein and the large cysteine-rich periplasmic protein. It has been described in publications as the Sarkosyl-insoluble COMC (Chlamydia outer membrane complex), and serves as the functional equivalent of peptidoglycan. Permits diffusion of specific solutes through the outer membrane. The chain is Major outer membrane porin, serovar F (ompA) from Chlamydia trachomatis.